The following is a 349-amino-acid chain: NADP-dependent alcohol dehydrogenase C 1 (349 aa).

Zn(2+)-binding residues include Cys41, His63, Cys94, Cys97, Cys100, Cys108, and Cys159. An Isoglutamyl lysine isopeptide (Lys-Gln) (interchain with Q-Cter in protein Pup) cross-link involves residue Lys210.

The protein belongs to the zinc-containing alcohol dehydrogenase family. Zn(2+) serves as cofactor.

It carries out the reaction a primary alcohol + NADP(+) = an aldehyde + NADPH + H(+). Prefers aldehydes over alcohols. The protein is NADP-dependent alcohol dehydrogenase C 1 (adhc1) of Mycolicibacterium smegmatis (strain ATCC 700084 / mc(2)155) (Mycobacterium smegmatis).